We begin with the raw amino-acid sequence, 161 residues long: Nucleotide-binding protein Veis_3464 (161 aa).

This sequence belongs to the YajQ family.

Functionally, nucleotide-binding protein. This Verminephrobacter eiseniae (strain EF01-2) protein is Nucleotide-binding protein Veis_3464.